The primary structure comprises 148 residues: Large ribosomal subunit protein uL13 (148 aa).

Residues 128 to 148 (PEHPHQAQNPQPFEINAKVEK) are disordered.

Belongs to the universal ribosomal protein uL13 family. In terms of assembly, part of the 50S ribosomal subunit.

Its function is as follows. This protein is one of the early assembly proteins of the 50S ribosomal subunit, although it is not seen to bind rRNA by itself. It is important during the early stages of 50S assembly. This chain is Large ribosomal subunit protein uL13, found in Saccharopolyspora erythraea (strain ATCC 11635 / DSM 40517 / JCM 4748 / NBRC 13426 / NCIMB 8594 / NRRL 2338).